We begin with the raw amino-acid sequence, 85 residues long: Putative sodium channel toxin Ts34 (85 aa).

The signal sequence occupies residues 1-17 (MNLPLLLLITILIEIHA). An LCN-type CS-alpha/beta domain is found at 19 to 82 (KDGYVIYKNS…IYGETGSYCW (64 aa)). Cystine bridges form between C30-C81, C34-C57, C43-C62, and C47-C64.

The protein belongs to the long (4 C-C) scorpion toxin superfamily. Sodium channel inhibitor family. In terms of tissue distribution, expressed by the venom gland.

It is found in the secreted. Its function is as follows. Putative sodium channel toxin. The sequence is that of Putative sodium channel toxin Ts34 from Tityus serrulatus (Brazilian scorpion).